The primary structure comprises 295 residues: Pyridoxal 5'-phosphate synthase subunit PdxS (295 aa).

Asp25 contacts D-ribose 5-phosphate. Catalysis depends on Lys82, which acts as the Schiff-base intermediate with D-ribose 5-phosphate. Gly154 is a binding site for D-ribose 5-phosphate. Residue Arg166 participates in D-glyceraldehyde 3-phosphate binding. D-ribose 5-phosphate-binding positions include Gly215 and 236 to 237; that span reads GS.

Belongs to the PdxS/SNZ family. In the presence of PdxT, forms a dodecamer of heterodimers.

The enzyme catalyses aldehydo-D-ribose 5-phosphate + D-glyceraldehyde 3-phosphate + L-glutamine = pyridoxal 5'-phosphate + L-glutamate + phosphate + 3 H2O + H(+). The protein operates within cofactor biosynthesis; pyridoxal 5'-phosphate biosynthesis. In terms of biological role, catalyzes the formation of pyridoxal 5'-phosphate from ribose 5-phosphate (RBP), glyceraldehyde 3-phosphate (G3P) and ammonia. The ammonia is provided by the PdxT subunit. Can also use ribulose 5-phosphate and dihydroxyacetone phosphate as substrates, resulting from enzyme-catalyzed isomerization of RBP and G3P, respectively. This Haemophilus ducreyi (strain 35000HP / ATCC 700724) protein is Pyridoxal 5'-phosphate synthase subunit PdxS.